A 192-amino-acid chain; its full sequence is UPF0312 protein plu2095 (192 aa).

The first 23 residues, 1–23, serve as a signal peptide directing secretion; that stretch reads MLKKTLLGLTAGALLLNASSALA.

It belongs to the UPF0312 family. Type 1 subfamily.

The protein resides in the periplasm. The chain is UPF0312 protein plu2095 from Photorhabdus laumondii subsp. laumondii (strain DSM 15139 / CIP 105565 / TT01) (Photorhabdus luminescens subsp. laumondii).